Consider the following 393-residue polypeptide: Proteasome-activating nucleotidase (393 aa).

Residues Asp-15–Ser-53 are a coiled coil. ATP contacts are provided by residues Gly-178–Met-183 and Tyr-317. Residues Met-365–Ser-393 are a coiled coil. Residues Lys-391–Ser-393 form a docks into pockets in the proteasome alpha-ring to cause gate opening region.

The protein belongs to the AAA ATPase family. In terms of assembly, homohexamer. The hexameric complex has a two-ring architecture resembling a top hat that caps the 20S proteasome core at one or both ends. Upon ATP-binding, the C-terminus of PAN interacts with the alpha-rings of the proteasome core by binding to the intersubunit pockets.

Its subcellular location is the cytoplasm. Its function is as follows. ATPase which is responsible for recognizing, binding, unfolding and translocation of substrate proteins into the archaeal 20S proteasome core particle. Is essential for opening the gate of the 20S proteasome via an interaction with its C-terminus, thereby allowing substrate entry and access to the site of proteolysis. Thus, the C-termini of the proteasomal ATPase function like a 'key in a lock' to induce gate opening and therefore regulate proteolysis. Unfolding activity requires energy from ATP hydrolysis, whereas ATP binding alone promotes ATPase-20S proteasome association which triggers gate opening, and supports translocation of unfolded substrates. This Saccharolobus solfataricus (strain ATCC 35092 / DSM 1617 / JCM 11322 / P2) (Sulfolobus solfataricus) protein is Proteasome-activating nucleotidase.